Here is a 122-residue protein sequence, read N- to C-terminus: Ribosome-binding factor A (122 aa).

The protein belongs to the RbfA family. As to quaternary structure, monomer. Binds 30S ribosomal subunits, but not 50S ribosomal subunits or 70S ribosomes.

Its subcellular location is the cytoplasm. One of several proteins that assist in the late maturation steps of the functional core of the 30S ribosomal subunit. Associates with free 30S ribosomal subunits (but not with 30S subunits that are part of 70S ribosomes or polysomes). Required for efficient processing of 16S rRNA. May interact with the 5'-terminal helix region of 16S rRNA. The sequence is that of Ribosome-binding factor A from Polynucleobacter necessarius subsp. necessarius (strain STIR1).